The following is a 638-amino-acid chain: 1-deoxy-D-xylulose-5-phosphate synthase (638 aa).

Thiamine diphosphate is bound by residues His81 and 122 to 124 (GHS). Asp153 contacts Mg(2+). Residues 154–155 (GS), Asn182, Tyr293, and Glu377 contribute to the thiamine diphosphate site. Residue Asn182 participates in Mg(2+) binding.

This sequence belongs to the transketolase family. DXPS subfamily. In terms of assembly, homodimer. The cofactor is Mg(2+). Thiamine diphosphate is required as a cofactor.

The catalysed reaction is D-glyceraldehyde 3-phosphate + pyruvate + H(+) = 1-deoxy-D-xylulose 5-phosphate + CO2. The protein operates within metabolic intermediate biosynthesis; 1-deoxy-D-xylulose 5-phosphate biosynthesis; 1-deoxy-D-xylulose 5-phosphate from D-glyceraldehyde 3-phosphate and pyruvate: step 1/1. Its function is as follows. Catalyzes the acyloin condensation reaction between C atoms 2 and 3 of pyruvate and glyceraldehyde 3-phosphate to yield 1-deoxy-D-xylulose-5-phosphate (DXP). The chain is 1-deoxy-D-xylulose-5-phosphate synthase from Oleidesulfovibrio alaskensis (strain ATCC BAA-1058 / DSM 17464 / G20) (Desulfovibrio alaskensis).